Here is a 244-residue protein sequence, read N- to C-terminus: Carboxy-S-adenosyl-L-methionine synthase (244 aa).

S-adenosyl-L-methionine is bound by residues Y38, 63 to 65 (GCS), 88 to 89 (DN), 116 to 117 (DI), N131, and R198.

This sequence belongs to the class I-like SAM-binding methyltransferase superfamily. Cx-SAM synthase family. Homodimer.

The enzyme catalyses prephenate + S-adenosyl-L-methionine = carboxy-S-adenosyl-L-methionine + 3-phenylpyruvate + H2O. Catalyzes the conversion of S-adenosyl-L-methionine (SAM) to carboxy-S-adenosyl-L-methionine (Cx-SAM). This chain is Carboxy-S-adenosyl-L-methionine synthase, found in Haemophilus ducreyi (strain 35000HP / ATCC 700724).